We begin with the raw amino-acid sequence, 284 residues long: NAD/NADP-dependent indole-3-acetaldehyde reductase (284 aa).

Asp49 provides a ligand contact to NADPH. Active-site proton donor residues include Tyr54 and His109. NADPH contacts are provided by Ser143, Gln165, Leu196, Arg201, Thr239, Thr240, Thr241, Ser242, Lys243, and Arg246.

This sequence belongs to the aldo/keto reductase family. As to quaternary structure, monomer.

The protein localises to the cytoplasm. It is found in the nucleus. It catalyses the reaction indole-3-ethanol + NAD(+) = indole-3-acetaldehyde + NADH + H(+). The catalysed reaction is indole-3-ethanol + NADP(+) = indole-3-acetaldehyde + NADPH + H(+). In Schizosaccharomyces pombe (strain 972 / ATCC 24843) (Fission yeast), this protein is NAD/NADP-dependent indole-3-acetaldehyde reductase.